The sequence spans 135 residues: Phosphomevalonate dehydratase small subunit (135 aa).

Ser-67 (proton acceptor) is an active-site residue.

This sequence belongs to the AcnX type II small subunit family. As to quaternary structure, heterodimer composed of a large subunit (PMDh-L) and a small subunit (PMDh-S).

The catalysed reaction is (R)-5-phosphomevalonate = (2E)-3-methyl-5-phosphooxypent-2-enoate + H2O. The protein operates within isoprenoid biosynthesis; isopentenyl diphosphate biosynthesis via mevalonate pathway. Component of a hydro-lyase that catalyzes the dehydration of mevalonate 5-phosphate (MVA5P) to form trans-anhydromevalonate 5-phosphate (tAHMP). Involved in the archaeal mevalonate (MVA) pathway, which provides fundamental precursors for isoprenoid biosynthesis, such as isopentenyl diphosphate (IPP) and dimethylallyl diphosphate (DMAPP). The sequence is that of Phosphomevalonate dehydratase small subunit from Methanopyrus kandleri (strain AV19 / DSM 6324 / JCM 9639 / NBRC 100938).